The sequence spans 37 residues: NAD-reducing hydrogenase HoxS subunit alpha (37 aa).

The protein belongs to the complex I 51 kDa subunit family. As to quaternary structure, tetramer of an alpha and a gamma subunits (flavin-containing dimer), and a delta and a nickel-containing beta subunits (hydrogenase dimer). The cofactor is FMN. It depends on [4Fe-4S] cluster as a cofactor.

The protein localises to the cytoplasm. It carries out the reaction H2 + NAD(+) = NADH + H(+). Functionally, subunits alpha and gamma of HoxS constitute an NADH--oxidoreductase. In Rhodococcus opacus (Nocardia opaca), this protein is NAD-reducing hydrogenase HoxS subunit alpha (hoxF).